Consider the following 184-residue polypeptide: NADH dehydrogenase [ubiquinone] 1 alpha subcomplex assembly factor 3 (184 aa).

The protein belongs to the NDUFAF3 family. Interacts with NDUFAF4, NDUFS2 and NDUFS3.

It is found in the nucleus. The protein resides in the mitochondrion inner membrane. In terms of biological role, essential factor for the assembly of mitochondrial NADH:ubiquinone oxidoreductase complex (complex I). This chain is NADH dehydrogenase [ubiquinone] 1 alpha subcomplex assembly factor 3 (NDUFAF3), found in Homo sapiens (Human).